The sequence spans 541 residues: Chaperonin GroEL (541 aa).

Residues Thr-29 to Pro-32, Asp-86 to Thr-90, Gly-413, Asp-477 to Leu-479, and Asp-493 contribute to the ATP site.

This sequence belongs to the chaperonin (HSP60) family. In terms of assembly, forms a cylinder of 14 subunits composed of two heptameric rings stacked back-to-back. Interacts with the co-chaperonin GroES.

It is found in the cytoplasm. The catalysed reaction is ATP + H2O + a folded polypeptide = ADP + phosphate + an unfolded polypeptide.. Its function is as follows. Together with its co-chaperonin GroES, plays an essential role in assisting protein folding. The GroEL-GroES system forms a nano-cage that allows encapsulation of the non-native substrate proteins and provides a physical environment optimized to promote and accelerate protein folding. This chain is Chaperonin GroEL, found in Clostridium beijerinckii (strain ATCC 51743 / NCIMB 8052) (Clostridium acetobutylicum).